A 346-amino-acid polypeptide reads, in one-letter code: tRNA N6-adenosine threonylcarbamoyltransferase (346 aa).

Positions 111 and 115 each coordinate Fe cation. Substrate is bound by residues 134–138 (LVSGG), Asp167, Gly180, and Asn279. Residue Asp307 coordinates Fe cation.

It belongs to the KAE1 / TsaD family. Requires Fe(2+) as cofactor.

It localises to the cytoplasm. It carries out the reaction L-threonylcarbamoyladenylate + adenosine(37) in tRNA = N(6)-L-threonylcarbamoyladenosine(37) in tRNA + AMP + H(+). Its function is as follows. Required for the formation of a threonylcarbamoyl group on adenosine at position 37 (t(6)A37) in tRNAs that read codons beginning with adenine. Is involved in the transfer of the threonylcarbamoyl moiety of threonylcarbamoyl-AMP (TC-AMP) to the N6 group of A37, together with TsaE and TsaB. TsaD likely plays a direct catalytic role in this reaction. This Burkholderia ambifaria (strain ATCC BAA-244 / DSM 16087 / CCUG 44356 / LMG 19182 / AMMD) (Burkholderia cepacia (strain AMMD)) protein is tRNA N6-adenosine threonylcarbamoyltransferase.